The primary structure comprises 218 residues: Ribonuclease S-7 (218 aa).

The signal sequence occupies residues 1 to 22 (MLNSPLTSVLFVLLFVLSPIYG). Residue Gln32 coordinates RNA. Residues Cys38 and Cys43 are joined by a disulfide bond. An N-linked (GlcNAc...) asparagine glycan is attached at Asn49. His53 provides a ligand contact to RNA. The Proton donor role is filled by His53. A glycan (N-linked (GlcNAc...) asparagine) is linked at Asn59. Residues Cys67 and Cys116 are joined by a disulfide bond. RNA-binding positions include 91–92 (DL), Phe105, 108–109 (HE), and 112–113 (KH). Glu109 is an active-site residue. His113 (proton acceptor) is an active-site residue. Asn162 is a glycosylation site (N-linked (GlcNAc...) asparagine). 2 disulfide bridges follow: Cys177–Cys207 and Cys190–Cys201.

This sequence belongs to the RNase T2 family.

Its subcellular location is the secreted. It is found in the extracellular space. It catalyses the reaction a ribonucleotidyl-ribonucleotide-RNA + H2O = a 3'-end 3'-phospho-ribonucleotide-RNA + a 5'-end dephospho-ribonucleoside-RNA + H(+). Functionally, self-incompatibility (SI) is the inherited ability of a flowering plant to prevent self-fertilization by discriminating between self and non-self pollen during pollination. In many species of the Solanaceae, self-incompatibility is controlled by the single, multiallelic locus S. This stylar glycoprotein is associated with expression of self-incompatibility in potato. This chain is Ribonuclease S-7, found in Nicotiana alata (Winged tobacco).